Reading from the N-terminus, the 189-residue chain is UPF0301 protein PST_3956 (189 aa).

Belongs to the UPF0301 (AlgH) family.

The sequence is that of UPF0301 protein PST_3956 from Stutzerimonas stutzeri (strain A1501) (Pseudomonas stutzeri).